The following is a 409-amino-acid chain: Dual-specificity RNA methyltransferase RlmN (409 aa).

Residue E126 is the Proton acceptor of the active site. The Radical SAM core domain occupies E132–R373. C139 and C384 form a disulfide bridge. Residues C146, C150, and C153 each coordinate [4Fe-4S] cluster. Residues G210–E211, S242, S264–H266, and N341 each bind S-adenosyl-L-methionine. Residue C384 is the S-methylcysteine intermediate of the active site.

This sequence belongs to the radical SAM superfamily. RlmN family. The cofactor is [4Fe-4S] cluster.

It is found in the cytoplasm. The enzyme catalyses adenosine(2503) in 23S rRNA + 2 reduced [2Fe-2S]-[ferredoxin] + 2 S-adenosyl-L-methionine = 2-methyladenosine(2503) in 23S rRNA + 5'-deoxyadenosine + L-methionine + 2 oxidized [2Fe-2S]-[ferredoxin] + S-adenosyl-L-homocysteine. It catalyses the reaction adenosine(37) in tRNA + 2 reduced [2Fe-2S]-[ferredoxin] + 2 S-adenosyl-L-methionine = 2-methyladenosine(37) in tRNA + 5'-deoxyadenosine + L-methionine + 2 oxidized [2Fe-2S]-[ferredoxin] + S-adenosyl-L-homocysteine. Its function is as follows. Specifically methylates position 2 of adenine 2503 in 23S rRNA and position 2 of adenine 37 in tRNAs. m2A2503 modification seems to play a crucial role in the proofreading step occurring at the peptidyl transferase center and thus would serve to optimize ribosomal fidelity. The chain is Dual-specificity RNA methyltransferase RlmN from Bartonella quintana (strain Toulouse) (Rochalimaea quintana).